The sequence spans 180 residues: Ribosome maturation factor RimM (180 aa).

One can recognise a PRC barrel domain in the interval 104 to 177; it reads PEEFHDHQLV…RVVVDPPGGL (74 aa).

Belongs to the RimM family. In terms of assembly, binds ribosomal protein uS19.

The protein localises to the cytoplasm. An accessory protein needed during the final step in the assembly of 30S ribosomal subunit, possibly for assembly of the head region. Essential for efficient processing of 16S rRNA. May be needed both before and after RbfA during the maturation of 16S rRNA. It has affinity for free ribosomal 30S subunits but not for 70S ribosomes. This chain is Ribosome maturation factor RimM, found in Salinispora arenicola (strain CNS-205).